The sequence spans 365 residues: uncharacterized protein (365 aa).

3 helical membrane-spanning segments follow: residues Thr105–Leu125, Ile151–Ile171, and Ile187–Phe207.

The protein localises to the cell membrane. This is an uncharacterized protein from Mycoplasma genitalium (strain ATCC 33530 / DSM 19775 / NCTC 10195 / G37) (Mycoplasmoides genitalium).